Reading from the N-terminus, the 426-residue chain is Serine--tRNA ligase (426 aa).

Position 227–229 (227–229 (TSE)) interacts with L-serine. ATP-binding positions include 258-260 (RKE) and Val274. Position 281 (Glu281) interacts with L-serine. 345-348 (ELTS) is a binding site for ATP. An L-serine-binding site is contributed by Thr380.

Belongs to the class-II aminoacyl-tRNA synthetase family. Type-1 seryl-tRNA synthetase subfamily. In terms of assembly, homodimer. The tRNA molecule binds across the dimer.

It localises to the cytoplasm. It carries out the reaction tRNA(Ser) + L-serine + ATP = L-seryl-tRNA(Ser) + AMP + diphosphate + H(+). The catalysed reaction is tRNA(Sec) + L-serine + ATP = L-seryl-tRNA(Sec) + AMP + diphosphate + H(+). The protein operates within aminoacyl-tRNA biosynthesis; selenocysteinyl-tRNA(Sec) biosynthesis; L-seryl-tRNA(Sec) from L-serine and tRNA(Sec): step 1/1. In terms of biological role, catalyzes the attachment of serine to tRNA(Ser). Is also able to aminoacylate tRNA(Sec) with serine, to form the misacylated tRNA L-seryl-tRNA(Sec), which will be further converted into selenocysteinyl-tRNA(Sec). In Clavibacter michiganensis subsp. michiganensis (strain NCPPB 382), this protein is Serine--tRNA ligase.